The sequence spans 271 residues: Solute carrier family 66 member 2 (271 aa).

3 helical membrane passes run 7–27 (GWLLVPLHQLVSWVAAGAMVF), 49–69 (FSTHVCLVLLVANILRILFWF), and 72–92 (HFESPLLWQSIVMILTMLLML). Residues 14–80 (HQLVSWVAAG…RHFESPLLWQ (67 aa)) form the PQ-loop 1 domain. S110 bears the Phosphoserine mark. The next 3 membrane-spanning stretches (helical) occupy residues 145 to 165 (DYVQCVLAFTGVAGYITYLSI), 168 to 188 (ALFVETLGFLAVLTEAMLGVP), and 232 to 252 (VCGLLQVMVDLVILGQAYAFA). Residues 178–233 (AVLTEAMLGVPQLYRNYCHRSTEGMSLKMVLMWTSGDTFKTAYFLLNGAPLQFSVC) enclose the PQ-loop 2 domain.

The protein resides in the membrane. In Mus musculus (Mouse), this protein is Solute carrier family 66 member 2 (Slc66a2).